The sequence spans 127 residues: MNIRNSLILIISTILFFSIINGSLSLDPTCVGAPDGQVYLFSSWDFKGDRYVYNVSQGYLSLSDGFRGNVQSFISGADVCFVKWYPIEQYQITAGESHRNYAALTNFGQRMDAIIPGNCSNIVCSPK.

The N-terminal stretch at 1 to 25 (MNIRNSLILIISTILFFSIINGSLS) is a signal peptide. Asn-54 and Asn-118 each carry an N-linked (GlcNAc...) asparagine glycan.

This sequence belongs to the Dictyostelium gerABC family.

Its subcellular location is the secreted. This chain is Spore germination protein 2 (gerB), found in Dictyostelium discoideum (Social amoeba).